Here is a 256-residue protein sequence, read N- to C-terminus: L-erythrulose-1-phosphate isomerase (256 aa).

The active-site Electrophile is the His-96. Glu-169 acts as the Proton acceptor in catalysis. The substrate site is built by Gly-175 and Ser-212.

The protein belongs to the triosephosphate isomerase family. Homodimer.

The protein localises to the cytoplasm. It carries out the reaction L-erythrulose 1-phosphate = D-erythrulose 4-phosphate. It participates in carbohydrate metabolism; erythritol degradation. Functionally, catalyzes the isomerization of D-erythrulose-4P to L-erythrulose-1P. This Brucella melitensis biotype 1 (strain ATCC 23456 / CCUG 17765 / NCTC 10094 / 16M) protein is L-erythrulose-1-phosphate isomerase.